We begin with the raw amino-acid sequence, 68 residues long: Small ribosomal subunit protein bS21 (68 aa).

Positions 35-68 (HYEKPSEKRARERAAAVRRARKMERKRMERDGIK) are disordered. Positions 37–49 (EKPSEKRARERAA) are enriched in basic and acidic residues. The segment covering 50 to 59 (AVRRARKMER) has biased composition (basic residues).

This sequence belongs to the bacterial ribosomal protein bS21 family.

The sequence is that of Small ribosomal subunit protein bS21 from Sphingopyxis alaskensis (strain DSM 13593 / LMG 18877 / RB2256) (Sphingomonas alaskensis).